We begin with the raw amino-acid sequence, 446 residues long: Fatty acid desaturase 2 (446 aa).

Residues 1 to 132 are Cytoplasmic-facing; sequence MGMGGQSGEG…EDMRLFKSNP (132 aa). One can recognise a Cytochrome b5 heme-binding domain in the interval 20–97; the sequence is EAQYSWEEIQ…LKPLYIGELA (78 aa). The helical transmembrane segment at 133-153 threads the bilayer; it reads AFFIFYLFHILLIEFLAWCTL. A topological domain (lumenal) is located at residue His-154. Residues 155 to 175 form a helical membrane-spanning segment; the sequence is YLGTGWIPAIITVLLLTISQA. Residues 176-265 are Cytoplasmic-facing; that stretch reads QAGWLQHDFG…IKYLPYNHQH (90 aa). A Histidine box-1 motif is present at residues 182–186; it reads HDFGH. Residues 219–223 carry the Histidine box-2 motif; sequence HFQHH. Residues 266 to 286 form a helical membrane-spanning segment; that stretch reads LYFFLIGPPLLIPVYFTVQII. Over 287-307 the chain is Lumenal; sequence KTMIARKDWVDLAWSVSYYVR. A helical membrane pass occupies residues 308 to 328; that stretch reads FFFTFVPFFGVLGSLALLNAV. Topologically, residues 329 to 446 are cytoplasmic; sequence RFFESHWFVW…QLWLDAYLHK (118 aa). Positions 384 to 388 match the Histidine box-3 motif; sequence QIEHH.

The protein belongs to the fatty acid desaturase type 1 family.

The protein resides in the endoplasmic reticulum membrane. The protein operates within lipid metabolism; polyunsaturated fatty acid biosynthesis. Component of a lipid metabolic pathway that catalyzes biosynthesis of highly unsaturated fatty acids (HUFA) from precursor essential polyunsaturated fatty acids (PUFA) linoleic acid (LA) (18:2n-6) and alpha-linolenic acid (ALA) (18:3n-3). Catalyzes the first and rate limiting step in this pathway which is the desaturation of LA (18:2n-6) and ALA (18:3n-3) into gamma-linoleic acid (GLA) (18:3n-6) and stearidonic acid (18:4n-3) respectively and other desaturation steps. Highly unsaturated fatty acids (HUFA) play pivotal roles in many biological functions. The protein is Fatty acid desaturase 2 (fads2) of Xenopus laevis (African clawed frog).